The chain runs to 3259 residues: Golgin subfamily B member 1 (3259 aa).

Met-1 is subject to N-acetylmethionine. Residues 1–3235 (MLSRLSGLAN…LRSLCHSRTR (3235 aa)) are Cytoplasmic-facing. Residues Ser-6, Ser-17, Ser-138, and Ser-528 each carry the phosphoserine modification. The stretch at 48-593 (EDVQERLAYA…RAEEADHEVL (546 aa)) forms a coiled coil. The interval 119-142 (GTVLPTEPQSEEQLSKHDKSSTEE) is disordered. Basic and acidic residues predominate over residues 131-142 (QLSKHDKSSTEE). The tract at residues 624–652 (LMPNEESSLPAVEKEQASTEHQSRTSEEI) is disordered. Residues 635-650 (VEKEQASTEHQSRTSE) are compositionally biased toward basic and acidic residues. Ser-653 carries the post-translational modification Phosphoserine. 3 coiled-coil regions span residues 677-1028 (DIGQ…KEIP), 1062-1245 (LKQT…ESID), and 1301-1779 (GTSV…TEKH). Residues 944 to 963 (AKKEQVEEDNEVSSGLKQNY) form a disordered region. Basic and acidic residues predominate over residues 1747 to 1763 (SEKDSLSEEVQDLKHQI). The disordered stretch occupies residues 1747–1829 (SEKDSLSEEV…SANPAVSKDF (83 aa)). Composition is skewed to polar residues over residues 1782-1794 (QTNVTEEGTQSIP) and 1802-1820 (SLSMSTRPTCSESVPSAKS). Residues 1828-3185 (DFSSHDEINN…EQIRRLEHSE (1358 aa)) adopt a coiled-coil conformation. Residues Ser-2216, Ser-2735, Ser-2872, and Ser-2884 each carry the phosphoserine modification. The tract at residues 2856 to 2876 (RKSEEGKQRSAAQPSTSPAEV) is disordered. Positions 2865-2875 (SAAQPSTSPAE) are enriched in polar residues. Residues 2998–3021 (TQPLKVQYQRQASPETSASPDGSQ) form a disordered region. Phosphoserine is present on Ser-3037. The segment at 3107–3140 (IDVAPGAPQEKNGVHRKSDPEELREPQQSFSEAQ) is disordered. The segment covering 3118 to 3131 (NGVHRKSDPEELRE) has biased composition (basic and acidic residues). The helical transmembrane segment at 3236 to 3256 (VPLLAAIYFLMIHVLLILCFT) threads the bilayer. Residues 3257–3259 (GHL) lie on the Lumenal side of the membrane.

Homodimer; disulfide-linked. Interacts with PLK3.

It is found in the golgi apparatus membrane. Its function is as follows. May participate in forming intercisternal cross-bridges of the Golgi complex. This Homo sapiens (Human) protein is Golgin subfamily B member 1 (GOLGB1).